A 579-amino-acid chain; its full sequence is L-arabinonate dehydratase (579 aa).

C59 is a binding site for [2Fe-2S] cluster. E91 is a Mg(2+) binding site. C127 is a binding site for [2Fe-2S] cluster. D128 serves as a coordination point for Mg(2+). C200 lines the [2Fe-2S] cluster pocket. E453 lines the Mg(2+) pocket.

It belongs to the IlvD/Edd family. As to quaternary structure, homotetramer. It depends on [2Fe-2S] cluster as a cofactor. Requires Mg(2+) as cofactor.

The enzyme catalyses L-arabinonate = 2-dehydro-3-deoxy-L-arabinonate + H2O. It catalyses the reaction D-galactonate = 2-dehydro-3-deoxy-D-galactonate + H2O. It carries out the reaction D-fuconate = 2-dehydro-3-deoxy-D-fuconate + H2O. Its pathway is carbohydrate metabolism. In terms of biological role, catalyzes the dehydration of L-arabinonate to 2-dehydro-3-deoxy-L-arabinonate during L-arabinose degradation. Can also dehydrate D-galactonate and D-fuconate with good catalytic efficiency. Has weak activity with D-xylonate and D-gluconate. This chain is L-arabinonate dehydratase, found in Rhizobium leguminosarum bv. trifolii (strain WSM2304).